Here is a 403-residue protein sequence, read N- to C-terminus: Metacaspase-1 (403 aa).

The segment at 1–95 (MFPGSGHNTY…PSGSQSFGQN (95 aa)) is disordered. The segment covering 13–22 (YPPPQGPPPN) has biased composition (pro residues). Low complexity-rich tracts occupy residues 23 to 34 (NNGYNSGPNNSY) and 49 to 62 (QYDQQSQYSQQSQP). Residues His193 and Cys249 contribute to the active site.

This sequence belongs to the peptidase C14B family.

In terms of biological role, involved in cell death (apoptosis). This is Metacaspase-1 (MCA1) from Scheffersomyces stipitis (strain ATCC 58785 / CBS 6054 / NBRC 10063 / NRRL Y-11545) (Yeast).